The sequence spans 146 residues: Large ribosomal subunit protein uL15 (146 aa).

The tract at residues 1–57 (MKLHELKPAQGSRKTRNRVGRGSSSGNGKTAGRGQKGQKARSGGNIRSGFEGGQTPL) is disordered. Residues 23 to 35 (SSSGNGKTAGRGQ) show a composition bias toward gly residues.

This sequence belongs to the universal ribosomal protein uL15 family. Part of the 50S ribosomal subunit.

Functionally, binds to the 23S rRNA. This is Large ribosomal subunit protein uL15 from Streptococcus mutans serotype c (strain ATCC 700610 / UA159).